The sequence spans 258 residues: Regulatory protein RecX (258 aa).

This sequence belongs to the RecX family.

The protein resides in the cytoplasm. Modulates RecA activity. In Streptococcus equi subsp. zooepidemicus (strain MGCS10565), this protein is Regulatory protein RecX.